The primary structure comprises 87 residues: Small ribosomal subunit protein uS17 (87 aa).

This sequence belongs to the universal ribosomal protein uS17 family. As to quaternary structure, part of the 30S ribosomal subunit.

Functionally, one of the primary rRNA binding proteins, it binds specifically to the 5'-end of 16S ribosomal RNA. The chain is Small ribosomal subunit protein uS17 from Lacticaseibacillus casei (strain BL23) (Lactobacillus casei).